We begin with the raw amino-acid sequence, 492 residues long: MNTQQLAKLRTIVPEMRRVRHIHFVGIGGAGMGGIAEVLANEGYQISGSDLAPNPVTQQLSALGATIYFHHRPENVLDASVVVVSTAISADNPELVAAREARIPVIRRAEMLAELMRFRHGIAVAGTHGKTTTTAMVSSIYAEAGLDPTFVNGGLVKAAGTHARLGSSRYLIAEADESDASFLHLQPMVAIVTNIEADHMETYQGDFENLKQTFINFLHNLPFYGRAVMCVDDPVVRELLPRVGRHITTYGFSDDADVRIESYRQVGPQGHFTLSRQDKPLMTVTLNAPGRHNALNAAAAVAVATEEGIDDADILRALAGFQGTGRRFDFLGEFPLEPVNGKSGSAMLVDDYGHHPTEVDATLKAARAGWPDKRLVMVFQPHRYTRTRDLYDDFANVLSQVDVLLMLDVYSAGETAIPGADSRSLCRTIRSRGKLDPILVSDADTVPETLAQLLQADDLVLVQGAGNVGKVARKLAELKLQPQKKEEEHHGR.

126 to 132 contributes to the ATP binding site; the sequence is GTHGKTT.

The protein belongs to the MurCDEF family.

It localises to the cytoplasm. The enzyme catalyses UDP-N-acetyl-alpha-D-muramate + L-alanine + ATP = UDP-N-acetyl-alpha-D-muramoyl-L-alanine + ADP + phosphate + H(+). Its pathway is cell wall biogenesis; peptidoglycan biosynthesis. Cell wall formation. This Serratia proteamaculans (strain 568) protein is UDP-N-acetylmuramate--L-alanine ligase.